A 918-amino-acid chain; its full sequence is Valine--tRNA ligase (918 aa).

The 'HIGH' region motif lies at 50-60; sequence PNVTGSLHMGH. A 'KMSKS' region motif is present at residues 548 to 552; the sequence is KMSKS. Position 551 (Lys551) interacts with ATP. The stretch at 849–883 forms a coiled coil; that stretch reads NDFVNLEALKDRLTKDLKKVNSDIETLNKRISNKN.

Belongs to the class-I aminoacyl-tRNA synthetase family. ValS type 1 subfamily. In terms of assembly, monomer.

The protein resides in the cytoplasm. The enzyme catalyses tRNA(Val) + L-valine + ATP = L-valyl-tRNA(Val) + AMP + diphosphate. Its function is as follows. Catalyzes the attachment of valine to tRNA(Val). As ValRS can inadvertently accommodate and process structurally similar amino acids such as threonine, to avoid such errors, it has a 'posttransfer' editing activity that hydrolyzes mischarged Thr-tRNA(Val) in a tRNA-dependent manner. This is Valine--tRNA ligase from Prochlorococcus marinus subsp. pastoris (strain CCMP1986 / NIES-2087 / MED4).